Here is a 338-residue protein sequence, read N- to C-terminus: MIQLEGVSVDFSQGKQPSNLAVDNVSLHIQRGEVYGIVGTSGAGKSTLLRTINLLQRPTSGRVLVNGVLISELAGQPLREQRQKIGMIFQHFNLMQTRTVTENVAFSLKAAGKSNAEITLRVPEILSLVGLSDKASSYPAQLSGGQKQRVGIARAIANDPEVLLCDEPTSALDLETSAAILALLKEINEKLGITIVLISHEMSVIKAVCDRVAVMTGGRVVEEGDVFDIFATPQHAFTRQLVSHTLDLALPPRLLEDLQGTLLKILFVGESAEQPVLSDVATRFGVSVNILHGKIEYIGNRALGILVALLTHPSDPEKVAEAVEHIQVRTANVEVLHG.

Residues 2 to 242 enclose the ABC transporter domain; sequence IQLEGVSVDF…PQHAFTRQLV (241 aa). 39–46 is an ATP binding site; the sequence is GTSGAGKS.

Belongs to the ABC transporter superfamily. Methionine importer (TC 3.A.1.24) family. As to quaternary structure, the complex is composed of two ATP-binding proteins (MetN), two transmembrane proteins (MetI) and a solute-binding protein (MetQ).

The protein resides in the cell inner membrane. It catalyses the reaction L-methionine(out) + ATP + H2O = L-methionine(in) + ADP + phosphate + H(+). The catalysed reaction is D-methionine(out) + ATP + H2O = D-methionine(in) + ADP + phosphate + H(+). In terms of biological role, part of the ABC transporter complex MetNIQ involved in methionine import. Responsible for energy coupling to the transport system. The sequence is that of Methionine import ATP-binding protein MetN 2 from Pectobacterium atrosepticum (strain SCRI 1043 / ATCC BAA-672) (Erwinia carotovora subsp. atroseptica).